Here is a 720-residue protein sequence, read N- to C-terminus: TAL effector protein Rip19 (720 aa).

2 disordered regions span residues 13–85 (SVSL…PSLV) and 175–205 (QAFA…PTFL). A compositionally biased stretch (pro residues) spans 67 to 85 (PRRPLPVAPASAPPAPSLV). Residues 185–191 (RSARARR) carry the Nuclear localization signal 1 motif. The stretch at 286–320 (LTRAHIVDIARQRSGDLALQALLPVATALTAAPLR) is one Cryptic repeat -1 repeat. One copy of the Cryptic repeat 0 repeat lies at 321–354 (LSASQIATVAQYGERPAIQALYRLRRKLTRAPLH). One copy of the Core repeat 1 repeat lies at 355–389 (LTPQQVVAIASHDGGKPALEAVWAKLPVLRGVPYA). Residues 390–423 (LSTAQVVAIACISGQQALEAIEAHMPTLRQAPHS) form a Cryptic repeat +1 repeat. The stretch at 424–457 (LSPERVAAIACIGGRSAVEAVRQGLPVKAIRRIR) is one Cryptic repeat +2 repeat. Short sequence motifs (nuclear localization signal) lie at residues 455-458 (RIRR), 583-586 (HRKR), and 620-623 (RRKR). Residues 571–611 (SPGMAGQSACSPHRKRPAETAIAPRSIRRRPNNAGQPSEPW) are disordered.

This sequence belongs to the transcription activator-like effector (TALE) family. RipTAL/RTL subfamily.

The protein resides in the secreted. It is found in the host nucleus. In terms of biological role, does not activate plant gene transcription, because it has too few core repeats. This Ralstonia solanacearum (Pseudomonas solanacearum) protein is TAL effector protein Rip19.